The primary structure comprises 219 residues: Envelope protein UL45 homolog (219 aa).

Over 1 to 57 the chain is Intravirion; that stretch reads MEDYKLLQLETATVDAQAPPLPTKTVPVFAPPLSTPPQPNELVYTKRRRTKRKAKCR. The chain crosses the membrane as a helical; Signal-anchor for type II membrane protein span at residues 58–78; the sequence is CLFFTMGMFALGVLMTTAILV. At 79–219 the chain is on the virion surface side; that stretch reads STFILTVPIG…RLDHIIPFPR (141 aa). N-linked (GlcNAc...) asparagine; by host glycans are attached at residues Asn-113, Asn-120, and Asn-138.

It belongs to the herpesviridae HHV-1 UL45 family. N-glycosylated.

It localises to the virion membrane. The chain is Envelope protein UL45 homolog from Equine herpesvirus 1 (strain Ab4p) (EHV-1).